The sequence spans 169 residues: Small ribosomal subunit protein uS13c (169 aa).

The transit peptide at 1–47 (MAQMVAMPVAHSLSLICNWAKSNPLSRNTLALPASNTPNKQSLSIRC) directs the protein to the chloroplast.

It belongs to the universal ribosomal protein uS13 family. Part of the 30S ribosomal subunit.

It is found in the plastid. The protein resides in the chloroplast. Located at the top of the head of the 30S subunit, it contacts several helices of the 16S rRNA. In Arabidopsis thaliana (Mouse-ear cress), this protein is Small ribosomal subunit protein uS13c (RPS13).